The chain runs to 566 residues: Glucose-6-phosphate isomerase (566 aa).

The active-site Proton donor is the E374. Residues H405 and K529 contribute to the active site.

The protein belongs to the GPI family.

It is found in the cytoplasm. The catalysed reaction is alpha-D-glucose 6-phosphate = beta-D-fructose 6-phosphate. Its pathway is carbohydrate biosynthesis; gluconeogenesis. The protein operates within carbohydrate degradation; glycolysis; D-glyceraldehyde 3-phosphate and glycerone phosphate from D-glucose: step 2/4. Its function is as follows. Catalyzes the reversible isomerization of glucose-6-phosphate to fructose-6-phosphate. This Bifidobacterium longum (strain NCC 2705) protein is Glucose-6-phosphate isomerase.